Here is a 211-residue protein sequence, read N- to C-terminus: Thiamine-phosphate synthase (211 aa).

Residues 37–41 and Asn69 each bind 4-amino-2-methyl-5-(diphosphooxymethyl)pyrimidine; that span reads QLRIK. Residues Asp70 and Asp89 each contribute to the Mg(2+) site. Ser108 is a binding site for 4-amino-2-methyl-5-(diphosphooxymethyl)pyrimidine. Residue 134-136 coordinates 2-[(2R,5Z)-2-carboxy-4-methylthiazol-5(2H)-ylidene]ethyl phosphate; it reads TQT. Lys137 provides a ligand contact to 4-amino-2-methyl-5-(diphosphooxymethyl)pyrimidine. 2-[(2R,5Z)-2-carboxy-4-methylthiazol-5(2H)-ylidene]ethyl phosphate is bound by residues Gly166 and 186 to 187; that span reads VS.

It belongs to the thiamine-phosphate synthase family. Mg(2+) serves as cofactor.

It catalyses the reaction 2-[(2R,5Z)-2-carboxy-4-methylthiazol-5(2H)-ylidene]ethyl phosphate + 4-amino-2-methyl-5-(diphosphooxymethyl)pyrimidine + 2 H(+) = thiamine phosphate + CO2 + diphosphate. It carries out the reaction 2-(2-carboxy-4-methylthiazol-5-yl)ethyl phosphate + 4-amino-2-methyl-5-(diphosphooxymethyl)pyrimidine + 2 H(+) = thiamine phosphate + CO2 + diphosphate. The catalysed reaction is 4-methyl-5-(2-phosphooxyethyl)-thiazole + 4-amino-2-methyl-5-(diphosphooxymethyl)pyrimidine + H(+) = thiamine phosphate + diphosphate. The protein operates within cofactor biosynthesis; thiamine diphosphate biosynthesis; thiamine phosphate from 4-amino-2-methyl-5-diphosphomethylpyrimidine and 4-methyl-5-(2-phosphoethyl)-thiazole: step 1/1. In terms of biological role, condenses 4-methyl-5-(beta-hydroxyethyl)thiazole monophosphate (THZ-P) and 2-methyl-4-amino-5-hydroxymethyl pyrimidine pyrophosphate (HMP-PP) to form thiamine monophosphate (TMP). In Salmonella dublin (strain CT_02021853), this protein is Thiamine-phosphate synthase.